A 174-amino-acid polypeptide reads, in one-letter code: Large ribosomal subunit protein uL10 (174 aa).

The protein belongs to the universal ribosomal protein uL10 family. Part of the ribosomal stalk of the 50S ribosomal subunit. The N-terminus interacts with L11 and the large rRNA to form the base of the stalk. The C-terminus forms an elongated spine to which L12 dimers bind in a sequential fashion forming a multimeric L10(L12)X complex.

Its function is as follows. Forms part of the ribosomal stalk, playing a central role in the interaction of the ribosome with GTP-bound translation factors. This is Large ribosomal subunit protein uL10 from Coxiella burnetii (strain CbuK_Q154) (Coxiella burnetii (strain Q154)).